We begin with the raw amino-acid sequence, 416 residues long: Putative nucleoside permease NupX (416 aa).

Residues 1 to 2 lie on the Periplasmic side of the membrane; that stretch reads MD. A helical membrane pass occupies residues 3-23; sequence VMRSVLGMVVLLTIAFLLSVN. Over 24–31 the chain is Cytoplasmic; it reads KKKISLRT. The chain crosses the membrane as a helical span at residues 32–52; the sequence is VGAALVLQVVIGGIMLWLPPG. Topologically, residues 53–95 are periplasmic; that stretch reads RWVAEKVAFGVHKVMAYSDAGSAFIFGSLVGPKMDTLFDGAGF. A helical transmembrane segment spans residues 96 to 118; it reads IFGFRVLPAIIFVTALVSILYYI. At 119-172 the chain is on the cytoplasmic side; sequence GVMGILIRILGGIFQKALNISKIESFVAVTTIFLGQNEIPAIVKPFIDRLNRNE. Residues 173-193 form a helical membrane-spanning segment; the sequence is LFTAICSGMASIAGSTMIGYA. The Periplasmic portion of the chain corresponds to 194–196; sequence ALG. A helical membrane pass occupies residues 197–217; sequence VPVEYLLAASLMAIPGGILFA. The Cytoplasmic segment spans residues 218-246; that stretch reads RLLSPATESSQVSFNNLSFTETPPKSIIE. The chain crosses the membrane as a helical span at residues 247-267; it reads AAATGAMTGLKIAAGVATVVM. Topologically, residues 268–352 are periplasmic; sequence AFVAIIALIN…QTAGTLDAKT (85 aa). Residues 353 to 373 form a helical membrane-spanning segment; sequence VAIISFALCGFANFGSIGVVV. At 374 to 394 the chain is on the cytoplasmic side; the sequence is GAFSAVAPHRAPEIAQLGLRA. A helical transmembrane segment spans residues 395–415; the sequence is LAAATLSNLMSATIAGFFIGL. Alanine 416 is a topological domain (periplasmic).

The protein belongs to the concentrative nucleoside transporter (CNT) (TC 2.A.41) family.

It is found in the cell inner membrane. The polypeptide is Putative nucleoside permease NupX (nupX) (Escherichia coli (strain K12)).